The primary structure comprises 747 residues: MGRGPWDAGPSRRLLPLLLLLGLARGAAGAPGPDGLDVCATCHEHATCQQREGKKICICNYGFVGNGRTQCVDKNECQFGATLVCGNHTSCHNTPGGFYCICLEGYRATNNNKTFIPNDGTFCTDIDECEVSGLCRHGGRCVNTHGSFECYCMDGYLPRNGPEPFHPTTDATSCTEIDCGTPPEVPDGYIIGNYTSSLGSQVRYACREGFFSVPEDTVSSCTGLGTWESPKLHCQEINCGNPPEMRHAILVGNHSSRLGGVARYVCQEGFESPGGKITSVCTEKGTWRESTLTCTEILTKINDVSLFNDTCVRWQINSRRINPKISYVISIKGQRLDPMESVREETVNLTTDSRTPEVCLALYPGTNYTVNISTAPPRRSMPAVIGFQTAEVDLLEDDGSFNISIFNETCLKLNRRSRKVGSEHMYQFTVLGQRWYLANFSHATSFNFTTREQVPVVCLDLYPTTDYTVNVTLLRSPKRHSVQITIATPPAVKQTISNISGFNETCLRWRSIKTADMEEMYLFHIWGQRWYQKEFAQEMTFNISSSSRDPEVCLDLRPGTNYNVSLRALSSELPVVISLTTQITEPPLPEVEFFTVHRGPLPRLRLRKAKEKNGPISSYQVLVLPLALQSTFSCDSEGASSFFSNASDADGYVAAELLAKDVPDDAMEIPIGDRLYYGEYYNAPLKRGSDYCIILRITSEWNKVRRHSCAVWAQVKDSSLMLLQMAGVGLGSLAVVIILTFLSFSAV.

Residues 1–29 (MGRGPWDAGPSRRLLPLLLLLGLARGAAG) form the signal peptide. Residues 30–721 (APGPDGLDVC…WAQVKDSSLM (692 aa)) are Extracellular-facing. Residues 35 to 72 (GLDVCATCHEHATCQQREGKKICICNYGFVGNGRTQCV) enclose the EGF-like 1 domain. 5 disulfide bridges follow: C39/C48, C42/C57, C59/C71, C77/C91, and C85/C100. The EGF-like 2; calcium-binding domain occupies 73–112 (DKNECQFGATLVCGNHTSCHNTPGGFYCICLEGYRATNNN). N-linked (GlcNAc...) asparagine glycosylation is found at N87 and N112. One can recognise an EGF-like 3; calcium-binding domain in the interval 125–162 (DIDECEVSGLCRHGGRCVNTHGSFECYCMDGYLPRNGP). Intrachain disulfides connect C129-C141, C135-C150, C179-C221, C206-C234, C239-C281, and C266-C294. Sushi domains follow at residues 177–236 (IDCG…HCQE) and 237–296 (INCG…TCTE). N193 is a glycosylation site (N-linked (GlcNAc...) asparagine). N253 carries N-linked (GlcNAc...) asparagine glycosylation. N-linked (GlcNAc...) asparagine glycans are attached at residues N348, N367, and N563. Residues 722-742 (LLQMAGVGLGSLAVVIILTFL) form a helical membrane-spanning segment. At 743–747 (SFSAV) the chain is on the cytoplasmic side.

The protein localises to the membrane. This Homo sapiens (Human) protein is Sushi domain-containing protein 1 (SUSD1).